Reading from the N-terminus, the 333-residue chain is Gamma-D-glutamyl-L-lysine dipeptidyl-peptidase (333 aa).

Positions 1-23 (MKKVGTAFLTTLFIFSSFTSAHA) are cleaved as a signal peptide. Substrate is bound by residues glutamate 83, tyrosine 118, 237 to 239 (DCS), and 256 to 257 (DS). In terms of domain architecture, NlpC/P60 spans 208-332 (TPAADDLINT…EEYAGARRYL (125 aa)). Cysteine 238 acts as the Nucleophile in catalysis. Histidine 291 (proton acceptor) is an active-site residue. Histidine 303 is an active-site residue.

It belongs to the peptidase C40 family. As to quaternary structure, monomer in solution.

The enzyme catalyses The enzyme releases L-Ala-gamma-D-Glu dipeptides from cell wall peptides via cleavage of an L-Ala-gamma-D-Glu-|-L-Lys bond.. It participates in cell wall degradation; peptidoglycan degradation. Specifically hydrolyzes gamma-D-glutamyl-L-lysine bonds in murein peptides, releasing L-Ala-D-Glu. This chain is Gamma-D-glutamyl-L-lysine dipeptidyl-peptidase, found in Bacillus cereus (strain ATCC 10987 / NRS 248).